The sequence spans 848 residues: Adenylate cyclase (848 aa).

A catalytic region spans residues 1-535 (MYLYIETLKQ…DVSHHFPLRL (535 aa)). A regulatory region spans residues 541–848 (KALYSPCEIR…DTPLLQQYFS (308 aa)). Residue His609 is modified to Phosphohistidine; by CRR.

It belongs to the adenylyl cyclase class-1 family.

It localises to the cytoplasm. It carries out the reaction ATP = 3',5'-cyclic AMP + diphosphate. With respect to regulation, the regulatory domain is involved in the regulation of cyclase activity by the carbon source. Activated by the PTS system, glucose-specific IIA component (CRR). In terms of biological role, catalyzes the formation of the second messenger cAMP from ATP. Its transcript is probably degraded by endoribonuclease LS (rnlA), decreasing cAMP levels and the negative regulator Crp-cAMP, which then induces its own transcription again. This chain is Adenylate cyclase (cyaA), found in Escherichia coli (strain K12).